We begin with the raw amino-acid sequence, 367 residues long: 3-methyl-2-oxobutanoate dehydrogenase subunit alpha (367 aa).

Thiamine diphosphate-binding positions include 99–101 (QYR), 141–142 (PI), 170–176 (GDGATSE), 200–204 (NQWAI), and histidine 269. A substrate-binding site is contributed by tyrosine 100. 2 residues coordinate Mg(2+): aspartate 171 and asparagine 200.

Heteromer of E1 alpha (BkdA) and beta (BkdB) subunits. Part of the BCKADH complex, consisting of multiple copies of BkdA/BkdB (E1), BkdC (E2) and Lpd (E3). Mg(2+) is required as a cofactor. Thiamine diphosphate serves as cofactor.

The catalysed reaction is N(6)-[(R)-lipoyl]-L-lysyl-[protein] + 3-methyl-2-oxobutanoate + H(+) = N(6)-[(R)-S(8)-2-methylpropanoyldihydrolipoyl]-L-lysyl-[protein] + CO2. Functionally, component of the branched-chain alpha-ketoacid dehydrogenase (BCKADH) complex, that catalyzes the overall conversion of branched-chain alpha-ketoacids to acyl-CoA and CO(2). The polypeptide is 3-methyl-2-oxobutanoate dehydrogenase subunit alpha (bkdA) (Mycobacterium tuberculosis (strain CDC 1551 / Oshkosh)).